Consider the following 624-residue polypeptide: MASCFHPSAMATSHREEDSIILFSASNSPDEFSSASSSFSSSPLPTPNRYSLTVTNLSYTINHTPILNSVSLAAESSKILAVVGPSGTGKSTLLKIISGRVNHKALDPSSAVLMNNRKITDYNQLRRLCGFVPQDDDLLPLLTVKETLMYSAKFSLRDSTAKEREERVESLLSDLGLVLVQDSFVGEGDEEDRGVSGGERKRVSIAVEMIRDPPILLLDEPTSGLDSRNSLQVVELLATMAKSKQRTVLFSIHQPSYRILDYISDYLILSRGSVIHLGSLEHLEDSIAKLGFQIPEQLNPIEFAMEIVESLRTFKPNSVAVVESSSMWPENNENDGIISKKEAFRVLDVTEISYLCSRFCKIIYRTKQLFLARTMQAVVAGLGLGSVYTRLKRDEEGVAERLGLFAFSLSFLLSSTVEALPIYLRERRVLMKESSRGSYRISSYMIANTIAFVPFLFVVSLLFSIPVYWIVGLNPSIQAFSFFVLCVWLIILMASSLVLFLSAVSPDFISGNSLICTVLGAFFLFSGYFIPKEKIPKPWMFMYYVSLYRYPLESMVVNEYWSMREECFSSGNMGCLMTGEDVLKERGLDKDTRWINVGIMLAFFVFYRILCWGILLRKASKSTH.

One can recognise an ABC transporter domain in the interval 52–296; that stretch reads LTVTNLSYTI…IAKLGFQIPE (245 aa). 84 to 91 lines the ATP pocket; that stretch reads GPSGTGKS. The ABC transmembrane type-2 domain occupies 350-560; it reads TEISYLCSRF…PLESMVVNEY (211 aa). Transmembrane regions (helical) follow at residues 369–389, 402–422, 450–470, 480–500, 511–531, and 595–615; these read LFLA…SVYT, LGLF…ALPI, IAFV…VYWI, FSFF…LVLF, GNSL…YFIP, and INVG…WGIL.

The protein belongs to the ABC transporter superfamily. ABCG family. Eye pigment precursor importer (TC 3.A.1.204) subfamily.

It is found in the membrane. The sequence is that of ABC transporter G family member 23 (ABCG23) from Arabidopsis thaliana (Mouse-ear cress).